Reading from the N-terminus, the 28-residue chain is uncharacterized protein (28 aa).

The protein resides in the cell inner membrane. This is an uncharacterized protein from Escherichia coli (strain K12).